The primary structure comprises 92 residues: Small ribosomal subunit protein bS16 (92 aa).

It belongs to the bacterial ribosomal protein bS16 family.

The chain is Small ribosomal subunit protein bS16 from Staphylococcus carnosus (strain TM300).